The chain runs to 347 residues: Melatonin receptor type 1B-B (347 aa).

Over 1-36 the chain is Extracellular; sequence MPENIAFLTNSTDLGHVGRALGSSARPAWAIAVLAS. N-linked (GlcNAc...) asparagine glycosylation is present at N10. Residues 37–57 form a helical membrane-spanning segment; sequence VLIFTTVVDVLGNLLVIISVF. Residues 58–72 lie on the Cytoplasmic side of the membrane; the sequence is RNRKLRNAGNVFVVS. Residues 73-93 traverse the membrane as a helical segment; the sequence is LAFADLVVAFYPYPLVLYAIF. At 94 to 105 the chain is on the extracellular side; it reads HDGWSLGETQCK. Residues C104 and C181 are joined by a disulfide bond. Residues 106–126 form a helical membrane-spanning segment; sequence ISGFLMGLSVIGSVFNITGIA. At 127–148 the chain is on the cytoplasmic side; that stretch reads INRYCYICHSFAYGRLYSFRNT. The helical transmembrane segment at 149-169 threads the bilayer; sequence LLLVALIWALTVLAILPNFFV. Residues 170 to 191 lie on the Extracellular side of the membrane; it reads GSLSYDPRVYSCTFTQTASSSY. A helical membrane pass occupies residues 192–212; that stretch reads TVVVVVVHFLVPIAVVTFCYL. Residues 213–244 are Cytoplasmic-facing; that stretch reads RIWVLVIQVRRKVKSEERSRVRPSDLRNFVTM. A helical membrane pass occupies residues 245–265; sequence FVVFVLFAICWAPLNLIGLVV. The Extracellular portion of the chain corresponds to 266–278; sequence AINPEVMAPRVPE. A helical transmembrane segment spans residues 279-299; sequence WLFVVSYFMAYFNSCLNAIIY. The Cytoplasmic portion of the chain corresponds to 300 to 347; that stretch reads GLLNRNFRKEYVRIMTAVWIPRRFVTETSRAATDGMRSKPSPAINNNE.

It belongs to the G-protein coupled receptor 1 family.

It localises to the cell membrane. In terms of biological role, high affinity receptor for melatonin. The activity of this receptor is mediated by pertussis toxin sensitive G proteins that inhibits adenylate cyclase activity. The chain is Melatonin receptor type 1B-B (mtnr1bb) from Danio rerio (Zebrafish).